The sequence spans 84 residues: Molybdopterin synthase sulfur carrier subunit (84 aa).

A 1-thioglycine; alternate modification is found at Gly84. Gly84 carries the glycyl adenylate; alternate modification.

The protein belongs to the MoaD family. MOCS2A subfamily. In terms of assembly, heterotetramer; composed of 2 small (MOCS2A) and 2 large (MOCS2B) subunits. In terms of processing, C-terminal thiocarboxylation occurs in 2 steps, it is first acyl-adenylated (-COAMP) via the hesA/moeB/thiF part of MOCS3, then thiocarboxylated (-COSH) via the rhodanese domain of MOCS3.

It is found in the cytoplasm. The protein operates within cofactor biosynthesis; molybdopterin biosynthesis. Its function is as follows. Acts as a sulfur carrier required for molybdopterin biosynthesis. Component of the molybdopterin synthase complex that catalyzes the conversion of precursor Z into molybdopterin by mediating the incorporation of 2 sulfur atoms into precursor Z to generate a dithiolene group. In the complex, serves as sulfur donor by being thiocarboxylated (-COSH) at its C-terminus by MOCS3. After interaction with MOCS2B, the sulfur is then transferred to precursor Z to form molybdopterin. The protein is Molybdopterin synthase sulfur carrier subunit of Caenorhabditis elegans.